The following is a 375-amino-acid chain: Growth/differentiation factor 8 (375 aa).

The signal sequence occupies residues 1 to 18; it reads MQKLQISVYIYLFMLIVA. Residues 19–266 constitute a propeptide that is removed on maturation; sequence GPVDLNENSE…VTDTPKRSRR (248 aa). Residues N47 and N71 are each glycosylated (N-linked (GlcNAc...) asparagine). Disulfide bonds link C272/C282, C281/C340, C309/C372, and C313/C374.

The protein belongs to the TGF-beta family. In terms of assembly, homodimer; disulfide-linked. Interacts with WFIKKN2, leading to inhibit its activity. Interacts with FSTL3. Synthesized as large precursor molecule that undergoes proteolytic cleavage to generate an N-terminal propeptide and a disulfide linked C-terminal dimer, which is the biologically active molecule. The circulating form consists of a latent complex of the C-terminal dimer and other proteins, including its propeptide, which maintain the C-terminal dimer in a latent, inactive state. Ligand activation requires additional cleavage of the prodomain by a tolloid-like metalloproteinase.

Its subcellular location is the secreted. Functionally, acts specifically as a negative regulator of skeletal muscle growth. This Bos gaurus (Seladang) protein is Growth/differentiation factor 8 (MSTN).